Reading from the N-terminus, the 403-residue chain is Probable N-acetyltransferase HLS1 (403 aa).

The N-acetyltransferase domain occupies 2-177; sequence TVVREYDPTR…VNPVYAHRVN (176 aa).

Belongs to the acetyltransferase family.

In terms of biological role, ethylene-responsive N-acetyltransferase required for differential cell elongation in the hypocotyl. Regulates apical hook formation of dark-grown seedlings. May control differential cell growth by regulating auxin activity. May be involved in negative feedback regulation of auxin homeostasis through the control of GH3-like genes. Modulates de novo shoot organogenesis. This is Probable N-acetyltransferase HLS1 (HLS1) from Arabidopsis thaliana (Mouse-ear cress).